The chain runs to 295 residues: Polyprenyl transferase dpmaC (295 aa).

The next 8 membrane-spanning stretches (helical) occupy residues 39-59 (LFCV…NDWI), 84-104 (QAFV…HVML), 109-124 (VHVI…YPFL), 131-151 (KLHI…AIPG), 168-188 (YCLP…TAYS), 213-233 (LVLV…LTQF), 237-257 (WLWV…LALF), and 271-291 (SNFV…LLKA).

The protein belongs to the UbiA prenyltransferase family. Mg(2+) serves as cofactor.

The protein resides in the membrane. It functions in the pathway secondary metabolite biosynthesis; terpenoid biosynthesis. In terms of biological role, polyprenyl transferase; part of the gene cluster that mediates the biosynthesis of the diterpenoid pyrones subglutinols A and B. The first step of the pathway is the synthesis of the alpha-pyrone moiety by the polyketide synthase dpmaA via condensation of one acetyl-CoA starter unit with 3 malonyl-CoA units and 2 methylations. The alpha-pyrone is then combined with geranylgeranyl pyrophosphate (GGPP) formed by the GGPP synthase dpmaD through the action of the prenyltransferase dpmaC to yield a linear alpha-pyrone diterpenoid. Subsequent steps in the diterpenoid pyrone biosynthetic pathway involve the decalin core formation, which is initiated by the epoxidation of the C10-C11 olefin by the FAD-dependent oxidoreductase dpmaE, and is followed by a cyclization cascade catalyzed by the terpene cyclase dpmaB. The dehydrogenase dpmaF is then involved in tetrahydrofuran (THF) ring formation at the C5 unit to complete the formation of subglutinols A and B. The chain is Polyprenyl transferase dpmaC from Metarhizium anisopliae (Entomophthora anisopliae).